Here is a 221-residue protein sequence, read N- to C-terminus: Sentrin-specific protease 8 (221 aa).

Position 1 is an N-acetylmethionine (M1). Residues 11-174 (SLLRQSDVSL…MYVICNTEAL (164 aa)) form a protease region. Residues H102 and D119 contribute to the active site. C163 acts as the Nucleophile in catalysis.

This sequence belongs to the peptidase C48 family.

In terms of biological role, protease that catalyzes two essential functions in the NEDD8 pathway: processing of full-length NEDD8 to its mature form and deconjugation of NEDD8 from targeted proteins such as cullins or p53. This chain is Sentrin-specific protease 8 (Senp8), found in Mus musculus (Mouse).